The sequence spans 140 residues: Small ribosomal subunit protein uS12 (140 aa).

At aspartate 102 the chain carries 3-methylthioaspartic acid.

This sequence belongs to the universal ribosomal protein uS12 family. In terms of assembly, part of the 30S ribosomal subunit. Contacts proteins S8 and S17. May interact with IF1 in the 30S initiation complex.

Functionally, with S4 and S5 plays an important role in translational accuracy. Interacts with and stabilizes bases of the 16S rRNA that are involved in tRNA selection in the A site and with the mRNA backbone. Located at the interface of the 30S and 50S subunits, it traverses the body of the 30S subunit contacting proteins on the other side and probably holding the rRNA structure together. The combined cluster of proteins S8, S12 and S17 appears to hold together the shoulder and platform of the 30S subunit. This is Small ribosomal subunit protein uS12 from Bacillus anthracis (strain A0248).